The primary structure comprises 62 residues: Large ribosomal subunit protein bL32 (62 aa).

Residues 1–19 show a composition bias toward basic residues; sequence MAVPKRKTSKTRRDKRRAS. Positions 1–20 are disordered; the sequence is MAVPKRKTSKTRRDKRRASS.

Belongs to the bacterial ribosomal protein bL32 family.

The protein is Large ribosomal subunit protein bL32 of Finegoldia magna (strain ATCC 29328 / DSM 20472 / WAL 2508) (Peptostreptococcus magnus).